Here is a 441-residue protein sequence, read N- to C-terminus: Cysteine--tRNA ligase (441 aa).

Residue cysteine 24 coordinates Zn(2+). The short motif at 26–36 is the 'HIGH' region element; sequence PTVYNYIHIGN. Zn(2+)-binding residues include cysteine 204, histidine 230, and glutamate 234. The 'KMSKS' region motif lies at 262 to 266; it reads KMSKS. Lysine 265 contributes to the ATP binding site.

Belongs to the class-I aminoacyl-tRNA synthetase family. In terms of assembly, monomer. Zn(2+) is required as a cofactor.

The protein localises to the cytoplasm. It catalyses the reaction tRNA(Cys) + L-cysteine + ATP = L-cysteinyl-tRNA(Cys) + AMP + diphosphate. This Mycoplasma mycoides subsp. mycoides SC (strain CCUG 32753 / NCTC 10114 / PG1) protein is Cysteine--tRNA ligase.